The following is a 454-amino-acid chain: Bifunctional protein GlmU (454 aa).

Residues 1 to 226 form a pyrophosphorylase region; the sequence is MLAVAVLAAG…PDEVNGINNR (226 aa). UDP-N-acetyl-alpha-D-glucosamine contacts are provided by residues 7–10, K21, Q73, and 78–79; these read LAAG and GT. Position 103 (D103) interacts with Mg(2+). The UDP-N-acetyl-alpha-D-glucosamine site is built by G140, E155, N170, and N224. N224 lines the Mg(2+) pocket. The linker stretch occupies residues 227–247; it reads RQLAQCEGVLQQRLRDHWMDE. An N-acetyltransferase region spans residues 248–454; the sequence is GVTFVDPASC…WDRNTQAAQS (207 aa). The UDP-N-acetyl-alpha-D-glucosamine site is built by R329 and K347. H359 serves as the catalytic Proton acceptor. The UDP-N-acetyl-alpha-D-glucosamine site is built by Y362 and N373. The acetyl-CoA site is built by A376, A419, and R436.

The protein in the N-terminal section; belongs to the N-acetylglucosamine-1-phosphate uridyltransferase family. This sequence in the C-terminal section; belongs to the transferase hexapeptide repeat family. Homotrimer. Mg(2+) is required as a cofactor.

Its subcellular location is the cytoplasm. It catalyses the reaction alpha-D-glucosamine 1-phosphate + acetyl-CoA = N-acetyl-alpha-D-glucosamine 1-phosphate + CoA + H(+). The catalysed reaction is N-acetyl-alpha-D-glucosamine 1-phosphate + UTP + H(+) = UDP-N-acetyl-alpha-D-glucosamine + diphosphate. It participates in nucleotide-sugar biosynthesis; UDP-N-acetyl-alpha-D-glucosamine biosynthesis; N-acetyl-alpha-D-glucosamine 1-phosphate from alpha-D-glucosamine 6-phosphate (route II): step 2/2. It functions in the pathway nucleotide-sugar biosynthesis; UDP-N-acetyl-alpha-D-glucosamine biosynthesis; UDP-N-acetyl-alpha-D-glucosamine from N-acetyl-alpha-D-glucosamine 1-phosphate: step 1/1. Its pathway is bacterial outer membrane biogenesis; LPS lipid A biosynthesis. Its function is as follows. Catalyzes the last two sequential reactions in the de novo biosynthetic pathway for UDP-N-acetylglucosamine (UDP-GlcNAc). The C-terminal domain catalyzes the transfer of acetyl group from acetyl coenzyme A to glucosamine-1-phosphate (GlcN-1-P) to produce N-acetylglucosamine-1-phosphate (GlcNAc-1-P), which is converted into UDP-GlcNAc by the transfer of uridine 5-monophosphate (from uridine 5-triphosphate), a reaction catalyzed by the N-terminal domain. The polypeptide is Bifunctional protein GlmU (Synechococcus sp. (strain CC9311)).